The chain runs to 247 residues: TM2 domain-containing protein 3 (247 aa).

Residues 1–29 (MAGGVLPLRGLRALCRVLLFLSQFCILSG) form the signal peptide. The Extracellular portion of the chain corresponds to 30 to 179 (GEQSQALAQS…RTFPKMLYCN (150 aa)). 6 N-linked (GlcNAc...) asparagine glycosylation sites follow: Asn87, Asn122, Asn140, Asn157, Asn169, and Asn179. A helical transmembrane segment spans residues 180–200 (WTGGYKWSTALALSITLGGFG). One can recognise a TM2 domain in the interval 183 to 230 (GYKWSTALALSITLGGFGADRFYLGQWREGLGKLFSFGGLGIWTLIDV). Over 201-215 (ADRFYLGQWREGLGK) the chain is Cytoplasmic. Residues 216–236 (LFSFGGLGIWTLIDVLLIGVG) traverse the membrane as a helical segment. The Extracellular segment spans residues 237–247 (YVGPADGSLYI).

It belongs to the TM2 family. As to expression, widely expressed.

The protein resides in the membrane. Probable positive regulator of Notch signaling. The polypeptide is TM2 domain-containing protein 3 (TM2D3) (Homo sapiens (Human)).